The following is a 132-amino-acid chain: Fluoride-specific ion channel FluC 2 (132 aa).

4 helical membrane-spanning segments follow: residues 5–25 (VAVFIGGAIGSLLRYAVNLLG), 34–54 (TFIENTSGSLLLGLLTGFFAA), 59–79 (PLVQLCLGTGFCGGYTTMSAF), and 95–115 (VLYLMASLACGVCFAFLGIVI). 2 residues coordinate Na(+): glycine 71 and threonine 74.

This sequence belongs to the fluoride channel Fluc/FEX (TC 1.A.43) family.

It is found in the cell membrane. The catalysed reaction is fluoride(in) = fluoride(out). Na(+) is not transported, but it plays an essential structural role and its presence is essential for fluoride channel function. Its function is as follows. Fluoride-specific ion channel. Important for reducing fluoride concentration in the cell, thus reducing its toxicity. The chain is Fluoride-specific ion channel FluC 2 from Bacillus licheniformis (strain ATCC 14580 / DSM 13 / JCM 2505 / CCUG 7422 / NBRC 12200 / NCIMB 9375 / NCTC 10341 / NRRL NRS-1264 / Gibson 46).